Consider the following 261-residue polypeptide: Sulfur carrier protein FdhD (261 aa).

C105 serves as the catalytic Cysteine persulfide intermediate. 245–250 (FIRGDR) contacts Mo-bis(molybdopterin guanine dinucleotide).

It belongs to the FdhD family.

It localises to the cytoplasm. In terms of biological role, required for formate dehydrogenase (FDH) activity. Acts as a sulfur carrier protein that transfers sulfur from IscS to the molybdenum cofactor prior to its insertion into FDH. In Listeria monocytogenes serotype 4b (strain F2365), this protein is Sulfur carrier protein FdhD.